The following is a 334-amino-acid chain: Geranylgeranyl pyrophosphate synthase idtG (334 aa).

3 residues coordinate isopentenyl diphosphate: lysine 49, arginine 52, and histidine 81. Residues aspartate 88 and aspartate 92 each coordinate Mg(2+). Arginine 97 serves as a coordination point for dimethylallyl diphosphate. Residue arginine 98 participates in isopentenyl diphosphate binding. Residues lysine 175, threonine 176, and glutamine 209 each coordinate dimethylallyl diphosphate. Residue aspartate 212 participates in Mg(2+) binding. Asparagine 216, lysine 226, and lysine 236 together coordinate dimethylallyl diphosphate.

This sequence belongs to the FPP/GGPP synthase family. Mg(2+) is required as a cofactor.

The catalysed reaction is isopentenyl diphosphate + dimethylallyl diphosphate = (2E)-geranyl diphosphate + diphosphate. It carries out the reaction isopentenyl diphosphate + (2E)-geranyl diphosphate = (2E,6E)-farnesyl diphosphate + diphosphate. The enzyme catalyses isopentenyl diphosphate + (2E,6E)-farnesyl diphosphate = (2E,6E,10E)-geranylgeranyl diphosphate + diphosphate. It functions in the pathway secondary metabolite biosynthesis. Functionally, geranylgeranyl pyrophosphate synthase; part of the gene cluster that mediates the biosynthesis of paspalitrems, indole-diterpene (IDT) mycotoxins that are potent tremorgens in mammals. The geranylgeranyl diphosphate (GGPP) synthase idtG is proposed to catalyze the first step in IDT biosynthesis via catalysis of a series of iterative condensations of isopentenyl diphosphate (IPP) with dimethylallyl diphosphate (DMAPP), geranyl diphosphate (GPP), and farnesyl diphosphate (FPP), to form GGPP. Condensation of indole-3-glycerol phosphate with GGPP by the prenyltransferase idtC then forms 3-geranylgeranylindole (3-GGI). Epoxidation of the two terminal alkenes of the geranylgeranyl moiety by the FAD-dependent monooxygenase idtM, and cyclization by the terpene cyclase idtB then leads to the production of paspaline. The cytochrome P450 monooxygenase idtP then catalyzes oxidative elimination of the pendant methyl group at C-12 of paspaline and generates the C-10 ketone to yield 13-desoxypaxilline. The cytochrome P450 monooxygenase idtQ may catalyze the C-13 oxidation of 13-desoxypaxilline to afford paxilline. Considering that both paspalicine and paxilline were detected in C.paspali, idtQ also catalyzes the formation of paspalinine from 13-desoxypaxilline via paspalicine as an intermediate. Finally, the alpha-prenyltransferase idtF prenylates paspalinine at the C-20 or the C-21 positions to yield paspalitrems A and C, respectively. The hydroxylation of paspalitrem A at C-32 by a still unknown oxidase affords paspalitrem B. The protein is Geranylgeranyl pyrophosphate synthase idtG of Claviceps paspali (Rye ergot fungus).